Reading from the N-terminus, the 512-residue chain is ATP synthase subunit beta 2 (512 aa).

174 to 181 (GGAGVGKT) is an ATP binding site. Basic and acidic residues predominate over residues 479 to 494 (RRKEEAAREADARRDA). Residues 479–512 (RRKEEAAREADARRDAAAGAASGSAGPQGAQHGR) are disordered.

The protein belongs to the ATPase alpha/beta chains family. In terms of assembly, F-type ATPases have 2 components, CF(1) - the catalytic core - and CF(0) - the membrane proton channel. CF(1) has five subunits: alpha(3), beta(3), gamma(1), delta(1), epsilon(1). CF(0) has three main subunits: a(1), b(2) and c(9-12). The alpha and beta chains form an alternating ring which encloses part of the gamma chain. CF(1) is attached to CF(0) by a central stalk formed by the gamma and epsilon chains, while a peripheral stalk is formed by the delta and b chains.

It localises to the cell inner membrane. The catalysed reaction is ATP + H2O + 4 H(+)(in) = ADP + phosphate + 5 H(+)(out). In terms of biological role, produces ATP from ADP in the presence of a proton gradient across the membrane. The catalytic sites are hosted primarily by the beta subunits. The sequence is that of ATP synthase subunit beta 2 from Burkholderia thailandensis (strain ATCC 700388 / DSM 13276 / CCUG 48851 / CIP 106301 / E264).